The following is a 205-amino-acid chain: Translation initiation factor 2 subunit beta (205 aa).

The TRAM domain occupies 145-203 (GIEIGKEYTVTIESTGSAGEGIARYQGYTIYVPKAKKGERVKIIIRKIKRNVAIAELAD).

It belongs to the eIF-2-beta/eIF-5 family. In terms of assembly, heterotrimer composed of an alpha, a beta and a gamma chain.

Its function is as follows. eIF-2 functions in the early steps of protein synthesis by forming a ternary complex with GTP and initiator tRNA. The polypeptide is Translation initiation factor 2 subunit beta (Picrophilus torridus (strain ATCC 700027 / DSM 9790 / JCM 10055 / NBRC 100828 / KAW 2/3)).